Reading from the N-terminus, the 282-residue chain is MGRVTERRKVIRIRDGAVSTRPDTLVAEEPLEIRLNGKPLAITMRTPGDDFALAAGFLVSEGVLGEADELQNIVYCAGATVDGSNTYNVVDVRTAPGVVLPDITLERNVYTTSSCGLCGKASLDAVRTTARWTIDDTPPVRLEPELLASLPDRLRAAQRVFDRTGGLHAAALFTEEGELVDIREDVGRHNAVDKLVGRALQSGSLPLSRTVLLVSGRASFELAQKAVMAGIPVLAAVSAPSSLAVDLAAESGLTLVGFLRGASMNVYAGEHRIALRAAAAQG.

Cys-115 (cysteine persulfide intermediate) is an active-site residue.

The protein belongs to the FdhD family.

The protein localises to the cytoplasm. Its function is as follows. Required for formate dehydrogenase (FDH) activity. Acts as a sulfur carrier protein that transfers sulfur from IscS to the molybdenum cofactor prior to its insertion into FDH. This chain is Sulfur carrier protein FdhD, found in Streptomyces avermitilis (strain ATCC 31267 / DSM 46492 / JCM 5070 / NBRC 14893 / NCIMB 12804 / NRRL 8165 / MA-4680).